The following is a 289-amino-acid chain: Acetyl-coenzyme A carboxylase carboxyl transferase subunit beta (289 aa).

Positions 30–289 constitute a CoA carboxyltransferase N-terminal domain; the sequence is IWRECPRCHS…SNAWRANHDK (260 aa). Zn(2+) is bound by residues Cys-34, Cys-37, Cys-52, and Cys-55. The segment at 34 to 55 adopts a C4-type zinc-finger fold; that stretch reads CPRCHSRFYYRRFGNFDVCPEC.

Belongs to the AccD/PCCB family. Acetyl-CoA carboxylase is a heterohexamer composed of biotin carboxyl carrier protein (AccB), biotin carboxylase (AccC) and two subunits each of ACCase subunit alpha (AccA) and ACCase subunit beta (AccD). Zn(2+) is required as a cofactor.

Its subcellular location is the cytoplasm. The enzyme catalyses N(6)-carboxybiotinyl-L-lysyl-[protein] + acetyl-CoA = N(6)-biotinyl-L-lysyl-[protein] + malonyl-CoA. It functions in the pathway lipid metabolism; malonyl-CoA biosynthesis; malonyl-CoA from acetyl-CoA: step 1/1. Component of the acetyl coenzyme A carboxylase (ACC) complex. Biotin carboxylase (BC) catalyzes the carboxylation of biotin on its carrier protein (BCCP) and then the CO(2) group is transferred by the transcarboxylase to acetyl-CoA to form malonyl-CoA. The protein is Acetyl-coenzyme A carboxylase carboxyl transferase subunit beta of Oenococcus oeni (strain ATCC BAA-331 / PSU-1).